The primary structure comprises 234 residues: Glutathione S-transferase sirG (234 aa).

The GST N-terminal domain occupies 15-99 (LYVVKATPTS…YLTDAYDHEG (85 aa)). Residues 105-230 (DLWERTQVNN…KALSQKFRPS (126 aa)) form the GST C-terminal domain.

The protein belongs to the GST superfamily.

The enzyme catalyses RX + glutathione = an S-substituted glutathione + a halide anion + H(+). The protein operates within mycotoxin biosynthesis. In terms of biological role, glutathione S-transferase; part of the gene cluster that mediates the biosynthesis of sirodesmin PL, an epipolythiodioxopiperazine (ETP) characterized by a disulfide bridged cyclic dipeptide and that acts as a phytotoxin which is involved in the blackleg didease of canola. SirD catalyzes the O-prenylation of L-tyrosine (L-Tyr) in the presence of dimethylallyl diphosphate (DMAPP) to yield 4-O-dimethylallyl-L-Tyr, and therefore represents probably the first pathway-specific enzyme in the biosynthesis of sirodesmin PL. 4-O-dimethylallyl-L-Tyr, then undergoes condensation with L-Ser in a reaction catalyzed by the non-ribosomal peptide synthase sirP to form the diketopiperazine (DKP) backbone. Further bishydroxylation of the DKP performed by the cytochrome P450 monooxygenase sirC leads to the production of the intermediate phomamide. This step is essential to form the reactive thiol group required for toxicity of sirodesmin PL. The next steps of sirodesmin biosynthesis are not well understood yet, but some predictions could be made from intermediate compounds identification. Phomamide is converted into phomalizarine via oxidation, probably by sirT. Further oxidation, methylation (by sirM or sirN) and reduction steps convert phomalizarine to deacetyl sirodesmin. Finally, acetyltransferase sirH probably acetylates deacetyl sirodesmin to produce sirodesmin PL. The polypeptide is Glutathione S-transferase sirG (Leptosphaeria maculans (Blackleg fungus)).